The primary structure comprises 309 residues: tRNA uridine(34) hydroxylase (309 aa).

One can recognise a Rhodanese domain in the interval 137–232 (RGDEVVFFDG…YGEKYGDKGL (96 aa)). Residue Cys192 is the Cysteine persulfide intermediate of the active site.

Belongs to the TrhO family.

The enzyme catalyses uridine(34) in tRNA + AH2 + O2 = 5-hydroxyuridine(34) in tRNA + A + H2O. Catalyzes oxygen-dependent 5-hydroxyuridine (ho5U) modification at position 34 in tRNAs. This chain is tRNA uridine(34) hydroxylase, found in Corynebacterium jeikeium (strain K411).